The chain runs to 208 residues: N-(5'-phosphoribosyl)anthranilate isomerase (208 aa).

This sequence belongs to the TrpF family.

The catalysed reaction is N-(5-phospho-beta-D-ribosyl)anthranilate = 1-(2-carboxyphenylamino)-1-deoxy-D-ribulose 5-phosphate. It functions in the pathway amino-acid biosynthesis; L-tryptophan biosynthesis; L-tryptophan from chorismate: step 3/5. The chain is N-(5'-phosphoribosyl)anthranilate isomerase from Neisseria gonorrhoeae (strain ATCC 700825 / FA 1090).